We begin with the raw amino-acid sequence, 1033 residues long: TBC domain-containing protein kinase-like protein (1033 aa).

3 disordered regions span residues 1 to 21, 35 to 55, and 81 to 101; these read MMKSDEGVSGNSNNNNNYKFK, YDNNNNNNNNNNNNDDNNTVT, and GSIGGSSSSSSTSNSVSTPKP. Composition is skewed to low complexity over residues 36–52 and 81–97; these read DNNNNNNNNNNNNDDNN and GSIGGSSSSSSTSNSVS. The Protein kinase domain maps to 72 to 425; sequence NKLTINQNNG…SETLLDHPYF (354 aa). ATP-binding positions include 78 to 86 and K113; that span reads QNNGSIGGS. Positions 535 to 546 are enriched in polar residues; it reads STNSGLNSPQPY. A disordered region spans residues 535–560; the sequence is STNSGLNSPQPYQHQHHQHQHQHQHP. The span at 548 to 558 shows a compositional bias: basic residues; it reads HQHHQHQHQHQ. Residues 657 to 844 form the Rab-GAP TBC domain; sequence FVPPILRGDI…ILWDSILLCP (188 aa).

Belongs to the protein kinase superfamily. Ser/Thr protein kinase family.

This is TBC domain-containing protein kinase-like protein (tbck) from Dictyostelium discoideum (Social amoeba).